Here is a 379-residue protein sequence, read N- to C-terminus: Glutamate 5-kinase (379 aa).

Lys-19 provides a ligand contact to ATP. Substrate-binding residues include Ser-59, Asp-146, and Asn-158. 178–179 (TD) is an ATP binding site. The PUA domain maps to 285-363 (RGAVTVDAGA…SEFERLLGYV (79 aa)).

The protein belongs to the glutamate 5-kinase family.

Its subcellular location is the cytoplasm. It carries out the reaction L-glutamate + ATP = L-glutamyl 5-phosphate + ADP. The protein operates within amino-acid biosynthesis; L-proline biosynthesis; L-glutamate 5-semialdehyde from L-glutamate: step 1/2. In terms of biological role, catalyzes the transfer of a phosphate group to glutamate to form L-glutamate 5-phosphate. This is Glutamate 5-kinase from Variovorax paradoxus (strain S110).